We begin with the raw amino-acid sequence, 98 residues long: UPF0251 protein Sputw3181_3483 (98 aa).

The protein belongs to the UPF0251 family.

This Shewanella sp. (strain W3-18-1) protein is UPF0251 protein Sputw3181_3483.